A 496-amino-acid chain; its full sequence is ATP synthase subunit beta, chloroplastic (496 aa).

170–177 (GGAGVGKT) is a binding site for ATP.

It belongs to the ATPase alpha/beta chains family. As to quaternary structure, F-type ATPases have 2 components, CF(1) - the catalytic core - and CF(0) - the membrane proton channel. CF(1) has five subunits: alpha(3), beta(3), gamma(1), delta(1), epsilon(1). CF(0) has four main subunits: a(1), b(1), b'(1) and c(9-12).

It is found in the plastid. Its subcellular location is the chloroplast thylakoid membrane. It carries out the reaction ATP + H2O + 4 H(+)(in) = ADP + phosphate + 5 H(+)(out). Functionally, produces ATP from ADP in the presence of a proton gradient across the membrane. The catalytic sites are hosted primarily by the beta subunits. This chain is ATP synthase subunit beta, chloroplastic, found in Trachycarpus fortunei (Chinese windmill palm).